The following is a 1333-amino-acid chain: Protein grainyhead (1333 aa).

Disordered regions lie at residues 52–93 (SLSP…DSPQ), 439–598 (LLGS…PGAR), 617–655 (QTSH…GPYI), 727–784 (RFAG…GGAT), and 853–885 (TAVH…DFGR). A compositionally biased stretch (gly residues) spans 59–68 (GSGGHSGGGN). The span at 445–488 (SSSATVSTTGVVSTTTISHHQQQQQQQQQQQQQQQQQHQQQQQH) shows a compositional bias: low complexity. The span at 520 to 532 (IKREPEDLRKDPK) shows a compositional bias: basic and acidic residues. Low complexity-rich tracts occupy residues 533 to 546 (NGNI…NGPG) and 567 to 596 (PSTP…GSPG). Over residues 626-642 (GAGGGAGPAGAAGGGGV) the composition is skewed to gly residues. Positions 749 to 772 (QQQQQQQQHQQQQQQQQHHQQQQH) are enriched in low complexity. The segment covering 853-877 (TAVHGSQNSPTTSLVDTSTNGSTRS) has biased composition (polar residues). A Grh/CP2 DB domain is found at 899–1125 (TNVGFRYHLE…DFAKPPVLFS (227 aa)).

Belongs to the grh/CP2 family. Grainyhead subfamily. In terms of tissue distribution, restricted, during embryogenesis, to tissues derived from ectoderm, predominantly the central nervous system (CNS) and the epidermis.

The protein resides in the nucleus. Its function is as follows. Transcription factor that binds a CNS-specific regulatory element of the Dopa decarboxylase (Ddc) gene. Also interacts with sequences adjacent to other transcription units, including Ultrabithorax (Ubx) and engrailed (en). Activity in vivo may be required only at high levels transiently to activate the expression of Ddc in the CNS. The protein is Protein grainyhead (grh) of Drosophila melanogaster (Fruit fly).